The chain runs to 145 residues: UPF0179 protein MmarC7_0952 (145 aa).

It belongs to the UPF0179 family.

The polypeptide is UPF0179 protein MmarC7_0952 (Methanococcus maripaludis (strain C7 / ATCC BAA-1331)).